The chain runs to 115 residues: T cell receptor beta variable 7-6 (115 aa).

A signal peptide spans 1–21 (MGTSLLCWVVLGFLGTDHTGA). An Ig-like domain is found at 22–115 (GVSQSPRYKV…SAMYRCASSL (94 aa)). A disulfide bridge connects residues Cys-42 and Cys-111.

In terms of assembly, alpha-beta TR is a heterodimer composed of an alpha and beta chain; disulfide-linked. The alpha-beta TR is associated with the transmembrane signaling CD3 coreceptor proteins to form the TR-CD3 (TcR or TCR). The assembly of alpha-beta TR heterodimers with CD3 occurs in the endoplasmic reticulum where a single alpha-beta TR heterodimer associates with one CD3D-CD3E heterodimer, one CD3G-CD3E heterodimer and one CD247 homodimer forming a stable octameric structure. CD3D-CD3E and CD3G-CD3E heterodimers preferentially associate with TR alpha and TR beta chains, respectively. The association of the CD247 homodimer is the last step of TcR assembly in the endoplasmic reticulum and is required for transport to the cell surface.

It is found in the cell membrane. V region of the variable domain of T cell receptor (TR) beta chain that participates in the antigen recognition. Alpha-beta T cell receptors are antigen specific receptors which are essential to the immune response and are present on the cell surface of T lymphocytes. Recognize peptide-major histocompatibility (MH) (pMH) complexes that are displayed by antigen presenting cells (APC), a prerequisite for efficient T cell adaptive immunity against pathogens. Binding of alpha-beta TR to pMH complex initiates TR-CD3 clustering on the cell surface and intracellular activation of LCK that phosphorylates the ITAM motifs of CD3G, CD3D, CD3E and CD247 enabling the recruitment of ZAP70. In turn ZAP70 phosphorylates LAT, which recruits numerous signaling molecules to form the LAT signalosome. The LAT signalosome propagates signal branching to three major signaling pathways, the calcium, the mitogen-activated protein kinase (MAPK) kinase and the nuclear factor NF-kappa-B (NF-kB) pathways, leading to the mobilization of transcription factors that are critical for gene expression and essential for T cell growth and differentiation. The T cell repertoire is generated in the thymus, by V-(D)-J rearrangement. This repertoire is then shaped by intrathymic selection events to generate a peripheral T cell pool of self-MH restricted, non-autoaggressive T cells. Post-thymic interaction of alpha-beta TR with the pMH complexes shapes TR structural and functional avidity. The protein is T cell receptor beta variable 7-6 of Homo sapiens (Human).